The following is a 259-amino-acid chain: Small ribosomal subunit protein uS2 (259 aa).

This sequence belongs to the universal ribosomal protein uS2 family.

The chain is Small ribosomal subunit protein uS2 from Streptococcus pneumoniae (strain CGSP14).